Here is a 265-residue protein sequence, read N- to C-terminus: Protein IL-40 (265 aa).

Residues 1–20 (MGLPGLFCLAVLAASSFSKA) form the signal peptide. Residues N86 and N132 are each glycosylated (N-linked (GlcNAc...) asparagine).

In terms of tissue distribution, expressed in fetal liver and bone marrow. Expressed in peripheral blood lymphocyte B cells.

It is found in the secreted. In terms of biological role, probable B cell-associated cytokine that plays a role in the regulation of humoral immune responses. Involved in lymphocyte B cell development and immunoglobulin/IgA production. The polypeptide is Protein IL-40 (Homo sapiens (Human)).